The sequence spans 186 residues: Elongation factor P (186 aa).

It belongs to the elongation factor P family.

Its subcellular location is the cytoplasm. It participates in protein biosynthesis; polypeptide chain elongation. Functionally, involved in peptide bond synthesis. Stimulates efficient translation and peptide-bond synthesis on native or reconstituted 70S ribosomes in vitro. Probably functions indirectly by altering the affinity of the ribosome for aminoacyl-tRNA, thus increasing their reactivity as acceptors for peptidyl transferase. The protein is Elongation factor P of Polynucleobacter necessarius subsp. necessarius (strain STIR1).